A 203-amino-acid chain; its full sequence is Auxin-responsive protein IAA4 (203 aa).

The segment at 1-31 (MEECKGGGMSPSSSMDSSTHPALSTTSSAAT) is disordered. A compositionally biased stretch (low complexity) spans 10–31 (SPSSSMDSSTHPALSTTSSAAT). An EAR-like (transcriptional repression) motif is present at residues 40–44 (LRLGL). In terms of domain architecture, PB1 spans 108-202 (TLFVKVYMEG…KKLRIARMDK (95 aa)).

This sequence belongs to the Aux/IAA family. Homodimers and heterodimers.

It localises to the nucleus. Functionally, aux/IAA proteins are short-lived transcriptional factors that function as repressors of early auxin response genes at low auxin concentrations. The chain is Auxin-responsive protein IAA4 (IAA4) from Oryza sativa subsp. japonica (Rice).